Here is a 575-residue protein sequence, read N- to C-terminus: Interleukin-10 receptor subunit alpha (575 aa).

The signal sequence occupies residues 1–16 (MLSRLLPFLVTISSLS). At 17–241 (LEFIAYGTEL…QYFTVTNLSI (225 aa)) the chain is on the extracellular side. N-linked (GlcNAc...) asparagine glycans are attached at residues N50, N66, N113, and N182. An intrachain disulfide couples C204 to C225. An N-linked (GlcNAc...) asparagine glycan is attached at N238. A helical transmembrane segment spans residues 242–262 (LVISMLLFCGILVCLVLQWYI). The Cytoplasmic portion of the chain corresponds to 263-575 (RHPGKLPTVL…PLISSLQVEE (313 aa)). Y443 and Y493 each carry phosphotyrosine.

This sequence belongs to the type II cytokine receptor family. Interacts with IL10. Interacts with IL10RB. Interacts (via its cytoplasmic domain) with JAK1 (via N-terminus). Interacts with BTRC; this interaction leads to IL10RA ubiquitination and subsequent degradation. Interacts with STAT3. In terms of processing, phosphorylated. Phosphorylation of the cytoplasmic tail induced STAT3 activation. Post-translationally, ubiquitinated by BTRC; ubiquitination leads to endocytosis and subsequent degradation of IL10RA.

The protein resides in the cell membrane. It localises to the cytoplasm. In terms of biological role, cell surface receptor for the cytokine IL10 that participates in IL10-mediated anti-inflammatory functions, limiting excessive tissue disruption caused by inflammation. Upon binding to IL10, induces a conformational change in IL10RB, allowing IL10RB to bind IL10 as well. In turn, the heterotetrameric assembly complex, composed of two subunits of IL10RA and IL10RB, activates the kinases JAK1 and TYK2 that are constitutively associated with IL10RA and IL10RB respectively. These kinases then phosphorylate specific tyrosine residues in the intracellular domain in IL10RA leading to the recruitment and subsequent phosphorylation of STAT3. Once phosphorylated, STAT3 homodimerizes, translocates to the nucleus and activates the expression of anti-inflammatory genes. In addition, IL10RA-mediated activation of STAT3 inhibits starvation-induced autophagy. The protein is Interleukin-10 receptor subunit alpha (Il10ra) of Mus musculus (Mouse).